The sequence spans 181 residues: I-Kappa-B like protein C2 (181 aa).

ANK repeat units follow at residues 54-86, 91-121, and 125-154; these read DGKX…DINS, DGNT…DMEI, and ARKT…RCDV.

Belongs to the polydnaviridae I-Kappa-B-like protein family.

Suppresses the host immune response through NF-kappa-B inactivation. Possesses ankyrin repeat domains required for NF-kappa-B binding but lacks the regulatory regions required for dissociation from NF-kappa-B and degradation. Therefore, prevents host NF-kappa-B release and subsequent activation. This chain is I-Kappa-B like protein C2 (C2), found in Microplitis demolitor (Parasitoid wasp).